A 213-amino-acid chain; its full sequence is Octanoyltransferase (213 aa).

Residues E32–P207 form the BPL/LPL catalytic domain. Residues R71–H78, S138–G140, and G151–A153 each bind substrate. Catalysis depends on C169, which acts as the Acyl-thioester intermediate.

It belongs to the LipB family.

It is found in the cytoplasm. The enzyme catalyses octanoyl-[ACP] + L-lysyl-[protein] = N(6)-octanoyl-L-lysyl-[protein] + holo-[ACP] + H(+). It functions in the pathway protein modification; protein lipoylation via endogenous pathway; protein N(6)-(lipoyl)lysine from octanoyl-[acyl-carrier-protein]: step 1/2. In terms of biological role, catalyzes the transfer of endogenously produced octanoic acid from octanoyl-acyl-carrier-protein onto the lipoyl domains of lipoate-dependent enzymes. Lipoyl-ACP can also act as a substrate although octanoyl-ACP is likely to be the physiological substrate. The polypeptide is Octanoyltransferase (Citrobacter koseri (strain ATCC BAA-895 / CDC 4225-83 / SGSC4696)).